Consider the following 2140-residue polypeptide: Dedicator of cytokinesis protein 7 (2140 aa).

Residues S30, S180, and S182 each carry the phosphoserine modification. Residues 138–183 (FNPNTLDKQKERQKGLPKQVFESDEAPDGNSYQDDQDDLKRRSMSI) form a disordered region. The stretch at 365-395 (FKEADATKNKEKLEKLKSQADQFCQRLGKYR) forms a coiled coil. Residue K381 is modified to N6-methyllysine. The residue at position 450 (T450) is a Phosphothreonine. S452 is modified (phosphoserine). Residues 561 to 727 (RNLLYIYPQS…GVFNVEVVAV (167 aa)) enclose the C2 DOCK-type domain. 7 positions are modified to phosphoserine: S862, S864, S882, S888, S896, S900, and S905. The segment covering 888–901 (SLNLNRSRSLSNSN) has biased composition (low complexity). The interval 888 to 971 (SLNLNRSRSL…MSSHTETSSF (84 aa)) is disordered. 2 positions are modified to phosphothreonine: T907 and T909. Residues S910, S929, S964, S1383, K1390, A1394, E1398, Y1421, S1425, R1429, S1430, S1432, S1434, and S1438 each carry the phosphoserine modification. Polar residues predominate over residues 943-971 (SNPSPSAESTQAMDRSCNRMSSHTETSSF). The 437-residue stretch at 1678 to 2114 (KGYQTSPDLR…LQPLINRKIP (437 aa)) folds into the DOCKER domain. Residue K1962 is modified to N6-acetyllysine. Residues 2086–2112 (DQKEYQRELERNYHRLKEALQPLINRK) are a coiled coil. S2129 carries the post-translational modification Phosphoserine.

Belongs to the DOCK family. Component of the DOCK7-induced septin displacement/DISP complex, at least composed of DOCK7, LRCH3 and MYO6. Interacts with TSC1. Interacts with nucleotide-free RAC1 and RAC3. Interacts with TACC3 and CRY1. Interacts with NOD2. In terms of tissue distribution, widely expressed.

It is found in the cell projection. It localises to the axon. In terms of biological role, functions as a guanine nucleotide exchange factor (GEF), which activates Rac1 and Rac3 Rho small GTPases by exchanging bound GDP for free GTP. Does not have a GEF activity for CDC42. Required for STMN1 'Ser-15' phosphorylation during axon formation and consequently for neuronal polarization. As part of the DISP complex, may regulate the association of septins with actin and thereby regulate the actin cytoskeleton. Has a role in pigmentation. Involved in the regulation of cortical neurogenesis through the control of radial glial cells (RGCs) proliferation versus differentiation; negatively regulates the basal-to-apical interkinetic nuclear migration of RGCs by antagonizing the microtubule growth-promoting function of TACC3. This chain is Dedicator of cytokinesis protein 7 (DOCK7), found in Homo sapiens (Human).